Reading from the N-terminus, the 212-residue chain is Pyridoxine/pyridoxamine 5'-phosphate oxidase (212 aa).

Residues 8 to 11 (RREY) and Lys-66 contribute to the substrate site. FMN is bound by residues 61–66 (RIVLLK), 76–77 (FT), Arg-82, Lys-83, and Gln-105. Substrate-binding residues include Tyr-123, Arg-127, and Ser-131. FMN-binding positions include 140 to 141 (QS) and Trp-185. Residue 191–193 (RLH) coordinates substrate. Residue Arg-195 participates in FMN binding.

It belongs to the pyridoxamine 5'-phosphate oxidase family. As to quaternary structure, homodimer. The cofactor is FMN.

It carries out the reaction pyridoxamine 5'-phosphate + O2 + H2O = pyridoxal 5'-phosphate + H2O2 + NH4(+). It catalyses the reaction pyridoxine 5'-phosphate + O2 = pyridoxal 5'-phosphate + H2O2. It participates in cofactor metabolism; pyridoxal 5'-phosphate salvage; pyridoxal 5'-phosphate from pyridoxamine 5'-phosphate: step 1/1. Its pathway is cofactor metabolism; pyridoxal 5'-phosphate salvage; pyridoxal 5'-phosphate from pyridoxine 5'-phosphate: step 1/1. Catalyzes the oxidation of either pyridoxine 5'-phosphate (PNP) or pyridoxamine 5'-phosphate (PMP) into pyridoxal 5'-phosphate (PLP). This is Pyridoxine/pyridoxamine 5'-phosphate oxidase from Shewanella pealeana (strain ATCC 700345 / ANG-SQ1).